The following is a 21-amino-acid chain: Peptide PGLa-R4 (21 aa).

A Leucine amide modification is found at L21.

As to expression, expressed by the skin glands.

It is found in the secreted. Antimicrobial peptide. In Xenopus ruwenzoriensis (Uganda clawed frog), this protein is Peptide PGLa-R4.